We begin with the raw amino-acid sequence, 395 residues long: Indoleacetate--lysine synthetase (395 aa).

It belongs to the ATP-dependent AMP-binding enzyme family.

The enzyme catalyses (indol-3-yl)acetate + L-lysine + ATP = N(6)-[(indole-3-yl)acetyl]-L-lysine + ADP + phosphate + H(+). Functionally, conversion of IAA to IAA-lysine. This chain is Indoleacetate--lysine synthetase (iaaL), found in Pseudomonas savastanoi (Pseudomonas syringae pv. savastanoi).